A 37-amino-acid chain; its full sequence is Hemocyanin subunit B (37 aa).

The protein belongs to the tyrosinase family. Hemocyanin subfamily. Hemolymph.

Its subcellular location is the secreted. The protein resides in the extracellular space. Its function is as follows. Hemocyanins are copper-containing oxygen carriers occurring freely dissolved in the hemolymph of many mollusks and arthropods. This Cancer pagurus (Rock crab) protein is Hemocyanin subunit B.